Consider the following 114-residue polypeptide: Flagellar hook-basal body complex protein FliE (114 aa).

Belongs to the FliE family.

The protein resides in the bacterial flagellum basal body. The protein is Flagellar hook-basal body complex protein FliE of Desulfitobacterium hafniense (strain DSM 10664 / DCB-2).